Consider the following 348-residue polypeptide: UDP-3-O-acylglucosamine N-acyltransferase (348 aa).

The Proton acceptor role is filled by His237.

This sequence belongs to the transferase hexapeptide repeat family. LpxD subfamily. As to quaternary structure, homotrimer.

The catalysed reaction is a UDP-3-O-[(3R)-3-hydroxyacyl]-alpha-D-glucosamine + a (3R)-hydroxyacyl-[ACP] = a UDP-2-N,3-O-bis[(3R)-3-hydroxyacyl]-alpha-D-glucosamine + holo-[ACP] + H(+). It functions in the pathway bacterial outer membrane biogenesis; LPS lipid A biosynthesis. Functionally, catalyzes the N-acylation of UDP-3-O-acylglucosamine using 3-hydroxyacyl-ACP as the acyl donor. Is involved in the biosynthesis of lipid A, a phosphorylated glycolipid that anchors the lipopolysaccharide to the outer membrane of the cell. The polypeptide is UDP-3-O-acylglucosamine N-acyltransferase (Geotalea daltonii (strain DSM 22248 / JCM 15807 / FRC-32) (Geobacter daltonii)).